Here is a 97-residue protein sequence, read N- to C-terminus: YcgL domain-containing protein PputGB1_4120 (97 aa).

The 85-residue stretch at 3 to 87 (RICSIYKSPR…AEDEYIEHLP (85 aa)) folds into the YcgL domain.

This chain is YcgL domain-containing protein PputGB1_4120, found in Pseudomonas putida (strain GB-1).